A 415-amino-acid chain; its full sequence is tRNA(Met) cytidine acetate ligase (415 aa).

ATP-binding positions include 7–20, G102, N165, and 190–191; these read IVEYNPFHNGHLYH and RI.

Belongs to the TmcAL family.

The protein resides in the cytoplasm. It catalyses the reaction cytidine(34) in elongator tRNA(Met) + acetate + ATP = N(4)-acetylcytidine(34) in elongator tRNA(Met) + AMP + diphosphate. In terms of biological role, catalyzes the formation of N(4)-acetylcytidine (ac(4)C) at the wobble position of elongator tRNA(Met), using acetate and ATP as substrates. First activates an acetate ion to form acetyladenylate (Ac-AMP) and then transfers the acetyl group to tRNA to form ac(4)C34. The protein is tRNA(Met) cytidine acetate ligase of Acetivibrio thermocellus (strain ATCC 27405 / DSM 1237 / JCM 9322 / NBRC 103400 / NCIMB 10682 / NRRL B-4536 / VPI 7372) (Clostridium thermocellum).